The primary structure comprises 75 residues: CDC42 small effector protein 2-C (75 aa).

S-palmitoyl cysteine attachment occurs at residues Cys-10 and Cys-11. The region spanning 29–42 (IGEPMNFVHTAHVG) is the CRIB domain.

This sequence belongs to the CDC42SE/SPEC family.

The protein localises to the cytoplasm. It localises to the cytoskeleton. Its subcellular location is the cell membrane. In terms of biological role, probably involved in the organization of the actin cytoskeleton by acting downstream of CDC42, inducing actin filament assembly. The protein is CDC42 small effector protein 2-C (cdc42se2-c) of Xenopus laevis (African clawed frog).